The sequence spans 403 residues: Na(+)/H(+) antiporter NhaH (403 aa).

Residues 1-6 are Cytoplasmic-facing; the sequence is MHGFHD. A helical membrane pass occupies residues 7–27; that stretch reads VFIQILLLLAISVSVIAIAKL. Residues 28-30 are Extracellular-facing; it reads LKE. A helical transmembrane segment spans residues 31 to 51; it reads PDSIALVLVGLVLGLTELPII. At 52 to 65 the chain is on the cytoplasmic side; the sequence is EDAERYITQSEVFQ. A helical transmembrane segment spans residues 66 to 86; sequence ATIISLFLPILLGDATLKLPF. At 87 to 98 the chain is on the extracellular side; that stretch reads HHLFSQKKTVLG. The chain crosses the membrane as a helical span at residues 99–119; that stretch reads LAFVGTFVSSICIGTAAYFLL. Residues 120 to 124 lie on the Cytoplasmic side of the membrane; sequence DLPLA. The chain crosses the membrane as a helical span at residues 125 to 145; it reads VAFTFAALMSATDPISVLSIF. Residues 146-167 lie on the Extracellular side of the membrane; it reads KSLGVPQKMSTVMEGESLFNDG. Residues 168–188 traverse the membrane as a helical segment; it reads IAVVLFKIASIYLLTYMEMGW. The Cytoplasmic portion of the chain corresponds to 189 to 195; it reads AGLGSGV. A helical membrane pass occupies residues 196 to 216; it reads FLFLKFAIGGALVGLVLGYFF. Topologically, residues 217 to 218 are extracellular; the sequence is SQ. The chain crosses the membrane as a helical span at residues 219-239; sequence VIRVFDDYPLEVAFSALLFFG. Residues 240-241 lie on the Cytoplasmic side of the membrane; that stretch reads SY. The helical transmembrane segment at 242–262 threads the bilayer; sequence FIAEHFHTSGVIAVVVGGFVF. Over 263–281 the chain is Extracellular; the sequence is GDYGAKIGMSKETKTNINT. Residues 282–302 traverse the membrane as a helical segment; the sequence is FWDSVTLIANALIFLMVGLEI. The Cytoplasmic segment spans residues 303 to 310; sequence RNIDLAGN. The chain crosses the membrane as a helical span at residues 311-331; it reads WGVIVGAILIVLVGRTIAVYL. Topologically, residues 332–372 are extracellular; that stretch reads GTGWVQELSSKERLLINWGGLRGSLSVALALSLPMDFAGRD. The chain crosses the membrane as a helical span at residues 373 to 393; it reads QVLLLTFSVVLFSLIVQGLTL. The Cytoplasmic portion of the chain corresponds to 394-403; sequence KPLIKKLGMI.

The protein belongs to the monovalent cation:proton antiporter 1 (CPA1) transporter (TC 2.A.36) family.

It localises to the cell membrane. Its function is as follows. Na(+)/H(+) antiporter that extrudes sodium in exchange for external protons. Can also transport lithium. This Halobacillus dabanensis protein is Na(+)/H(+) antiporter NhaH (nhaH).